The chain runs to 70 residues: Large ribosomal subunit protein bL32 (70 aa).

The span at 1 to 19 (MAVPKRKTTPSRRGMRRSH) shows a compositional bias: basic residues. The tract at residues 1-21 (MAVPKRKTTPSRRGMRRSHQA) is disordered.

It belongs to the bacterial ribosomal protein bL32 family.

The sequence is that of Large ribosomal subunit protein bL32 from Gluconobacter oxydans (strain 621H) (Gluconobacter suboxydans).